Here is a 384-residue protein sequence, read N- to C-terminus: Ribosomal RNA small subunit methyltransferase H (384 aa).

S-adenosyl-L-methionine contacts are provided by residues 99–101, Asp118, Tyr145, Asp169, and Gln176; that span reads GGH.

Belongs to the methyltransferase superfamily. RsmH family.

It is found in the cytoplasm. It carries out the reaction cytidine(1402) in 16S rRNA + S-adenosyl-L-methionine = N(4)-methylcytidine(1402) in 16S rRNA + S-adenosyl-L-homocysteine + H(+). Functionally, specifically methylates the N4 position of cytidine in position 1402 (C1402) of 16S rRNA. In Mycobacteroides abscessus (strain ATCC 19977 / DSM 44196 / CCUG 20993 / CIP 104536 / JCM 13569 / NCTC 13031 / TMC 1543 / L948) (Mycobacterium abscessus), this protein is Ribosomal RNA small subunit methyltransferase H.